Consider the following 155-residue polypeptide: Sperm microtubule associated protein 1 (155 aa).

In Mus musculus (Mouse), this protein is Sperm microtubule associated protein 1 (Spmap1).